The primary structure comprises 546 residues: Chaperonin GroEL 1 (546 aa).

ATP contacts are provided by residues 30–33, Lys-51, 87–91, Gly-415, and Asp-495; these read TLGP and DGTTT. The interval 527–546 is disordered; that stretch reads DAAPTAAPGGPGAGGPGFDF. Positions 535–546 are enriched in gly residues; the sequence is GGPGAGGPGFDF.

The protein belongs to the chaperonin (HSP60) family. As to quaternary structure, forms a cylinder of 14 subunits composed of two heptameric rings stacked back-to-back. Interacts with the co-chaperonin GroES.

The protein resides in the cytoplasm. The catalysed reaction is ATP + H2O + a folded polypeptide = ADP + phosphate + an unfolded polypeptide.. Together with its co-chaperonin GroES, plays an essential role in assisting protein folding. The GroEL-GroES system forms a nano-cage that allows encapsulation of the non-native substrate proteins and provides a physical environment optimized to promote and accelerate protein folding. In Burkholderia lata (strain ATCC 17760 / DSM 23089 / LMG 22485 / NCIMB 9086 / R18194 / 383), this protein is Chaperonin GroEL 1.